The primary structure comprises 491 residues: Probable glycine dehydrogenase (decarboxylating) subunit 2 (491 aa).

Position 273 is an N6-(pyridoxal phosphate)lysine (K273).

Belongs to the GcvP family. C-terminal subunit subfamily. As to quaternary structure, the glycine cleavage system is composed of four proteins: P, T, L and H. In this organism, the P 'protein' is a heterodimer of two subunits. Pyridoxal 5'-phosphate is required as a cofactor.

The catalysed reaction is N(6)-[(R)-lipoyl]-L-lysyl-[glycine-cleavage complex H protein] + glycine + H(+) = N(6)-[(R)-S(8)-aminomethyldihydrolipoyl]-L-lysyl-[glycine-cleavage complex H protein] + CO2. Functionally, the glycine cleavage system catalyzes the degradation of glycine. The P protein binds the alpha-amino group of glycine through its pyridoxal phosphate cofactor; CO(2) is released and the remaining methylamine moiety is then transferred to the lipoamide cofactor of the H protein. In Bacillus cereus (strain AH187), this protein is Probable glycine dehydrogenase (decarboxylating) subunit 2.